The chain runs to 403 residues: Tryptophan 2,3-dioxygenase (403 aa).

Substrate is bound at residue 69 to 73 (FIVIH). The short motif at 133-135 (PLD) is the PLD motif; required for enzymatic activity element. A substrate-binding site is contributed by Arg-140. His-327 contributes to the heme binding site. Thr-341 lines the substrate pocket.

The protein belongs to the tryptophan 2,3-dioxygenase family. Homotetramer. Dimer of dimers. The cofactor is heme. In terms of tissue distribution, expressed in body wall muscle cells, hypodermis, PLM neurons and touch-receptor neurons.

The catalysed reaction is L-tryptophan + O2 = N-formyl-L-kynurenine. The protein operates within amino-acid degradation; L-tryptophan degradation via kynurenine pathway; L-kynurenine from L-tryptophan: step 1/2. Heme-dependent dioxygenase that catalyzes the oxidative cleavage of the L-tryptophan (L-Trp) pyrrole ring and converts L-tryptophan to N-formyl-L-kynurenine. Catalyzes the oxidative cleavage of the indole moiety. Involved in regulation of protein homeostasis, longevity and reproducive life span. Specifically regulates proteotoxicity due to age-related aggregation of proteins like alpha-synuclein, via its effects on tryptophan metabolism. This chain is Tryptophan 2,3-dioxygenase, found in Caenorhabditis elegans.